The primary structure comprises 197 residues: Isopentenyl-diphosphate Delta-isomerase (197 aa).

Residues His-41 and His-48 each coordinate Mn(2+). Positions 46-183 constitute a Nudix hydrolase domain; sequence RLHRAFSVFL…AWFMTVLDAA (138 aa). Residue Cys-83 is part of the active site. Residue Cys-83 participates in Mg(2+) binding. Position 85 (His-85) interacts with Mn(2+). Glu-103 contributes to the Mg(2+) binding site. Positions 130 and 132 each coordinate Mn(2+). Glu-132 is an active-site residue.

This sequence belongs to the IPP isomerase type 1 family. The cofactor is Mg(2+). Mn(2+) serves as cofactor.

Its subcellular location is the cytoplasm. It catalyses the reaction isopentenyl diphosphate = dimethylallyl diphosphate. It functions in the pathway isoprenoid biosynthesis; dimethylallyl diphosphate biosynthesis; dimethylallyl diphosphate from isopentenyl diphosphate: step 1/1. Functionally, catalyzes the 1,3-allylic rearrangement of the homoallylic substrate isopentenyl (IPP) to its highly electrophilic allylic isomer, dimethylallyl diphosphate (DMAPP). The sequence is that of Isopentenyl-diphosphate Delta-isomerase from Streptomyces coelicolor (strain ATCC BAA-471 / A3(2) / M145).